Consider the following 96-residue polypeptide: UPF0235 protein Ent638_3359 (96 aa).

This sequence belongs to the UPF0235 family.

In Enterobacter sp. (strain 638), this protein is UPF0235 protein Ent638_3359.